Consider the following 1396-residue polypeptide: Integrin alpha-PS2 (1396 aa).

The first 31 residues, 1-31 (MSGDSIHRRRMALHCPITSLILLLIAMSAHG), serve as a signal peptide directing secretion. Over 32–1341 (YNIDLPSYVR…EPEPLQVPDV (1310 aa)) the chain is Extracellular. FG-GAP repeat units follow at residues 36–106 (LPSY…DCKL), 117–174 (NVDK…FTSH), 186–239 (RTNN…FPFK), 266–317 (STSE…RWNM), 318–383 (ANIF…TEEK), 386–445 (TTEH…GPLA), and 452–514 (KSEQ…FASN). Asn-69 carries N-linked (GlcNAc...) asparagine glycosylation. Asn-209 carries an N-linked (GlcNAc...) asparagine glycan. N-linked (GlcNAc...) asparagine glycosylation occurs at Asn-322. Asn-584, Asn-598, Asn-741, Asn-783, Asn-833, and Asn-959 each carry an N-linked (GlcNAc...) asparagine glycan. Disordered regions lie at residues 960 to 1107 (STDA…LGTL) and 1159 to 1246 (PGFQ…KPLQ). Residues 963–979 (AGDKLSPKQVEQRRQED) show a composition bias toward basic and acidic residues. The segment covering 997–1006 (QAVQEPQVNQ) has biased composition (polar residues). Asn-1005 is a glycosylation site (N-linked (GlcNAc...) asparagine). 2 stretches are compositionally biased toward low complexity: residues 1007–1021 (TSFT…SSGS) and 1060–1071 (QQQQQHQQLLLA). A compositionally biased stretch (polar residues) spans 1082-1099 (VTFNDKSQFGGRNNNFHT). Low complexity-rich tracts occupy residues 1162 to 1182 (QGQT…GYQT) and 1217 to 1226 (SSSSSSSSSS). 2 N-linked (GlcNAc...) asparagine glycosylation sites follow: Asn-1299 and Asn-1307. A helical transmembrane segment spans residues 1342-1366 (VPLWVVVLAACAGALIFLLLVWLLY). Topologically, residues 1367–1396 (KCGFFNRNRPTDHSQERQPLRNGYHGDEHL) are cytoplasmic. Positions 1377-1396 (TDHSQERQPLRNGYHGDEHL) are disordered.

Belongs to the integrin alpha chain family. In terms of assembly, heterodimer of an alpha and a beta subunit. The alpha subunit is composed of a heavy and a light chain linked by a disulfide bond. Alpha-PS2 associates with beta-PS. The heavy-light chain cleavage site is either in 1230-1231, or 1233-1234, or 1243-1244. As to expression, in ovaries, highly expressed in follicle cells. At syncytial blastoderm stage, expressed in the embryonic mesodermal precursors but not in the ectoderm. At embryonic stages 7 and 10, expression is restricted to the mesoderm. At stage 12, expressed in the gonadal sheath and the interstitial cells of the gonad. In stage 16 embryos, expressed in the somatic and visceral muscles where localizes to sites of attachment between adjacent muscles. In third larval instar wing imaginal disk, expressed in the ventral compartment and in a subset of adepithelial and peripodial cells (at protein level).

The protein resides in the apical cell membrane. It localises to the lateral cell membrane. The protein localises to the basal cell membrane. Functionally, alpha-PS2/beta-PS is a receptor for Tig, wb and Ten-m. Involved in the function and/or development of the olfactory system. The polypeptide is Integrin alpha-PS2 (if) (Drosophila melanogaster (Fruit fly)).